Reading from the N-terminus, the 166-residue chain is MRRAVCPGSFDPIHNGHLEVIARAAGLFDEVIVAISTNYAKKYRFSLDERLEMARETLASLKGIVVEPVGEGLLAEYCRQRGVSAIVKGLRSSSDFDYELPMATMNRQLSGVETVFLPAEAHYIHLSSTLIKEVAGLGGNVSEYVPRSVLRRLLAGEPSANQQPRR.

Serine 9 contacts substrate. ATP is bound by residues 9-10 and histidine 17; that span reads SF. Lysine 41, leucine 74, and lysine 88 together coordinate substrate. ATP is bound by residues 89–91, glutamate 99, and 123–129; these read GLR and YIHLSST.

Belongs to the bacterial CoaD family. In terms of assembly, homohexamer. Requires Mg(2+) as cofactor.

It localises to the cytoplasm. The catalysed reaction is (R)-4'-phosphopantetheine + ATP + H(+) = 3'-dephospho-CoA + diphosphate. The protein operates within cofactor biosynthesis; coenzyme A biosynthesis; CoA from (R)-pantothenate: step 4/5. In terms of biological role, reversibly transfers an adenylyl group from ATP to 4'-phosphopantetheine, yielding dephospho-CoA (dPCoA) and pyrophosphate. The protein is Phosphopantetheine adenylyltransferase of Pseudarthrobacter chlorophenolicus (strain ATCC 700700 / DSM 12829 / CIP 107037 / JCM 12360 / KCTC 9906 / NCIMB 13794 / A6) (Arthrobacter chlorophenolicus).